The primary structure comprises 318 residues: Acyl-CoA dehydrogenase IpdE2 (318 aa).

Residues Arg210 and Gly277 each contribute to the FAD site.

Belongs to the acyl-CoA dehydrogenase family. As to quaternary structure, heterotetramer composed of 2 IpdE1 subunits and 2 IpdE2 subunits. FAD serves as cofactor.

It carries out the reaction 3-[(3aS,4S,5R,7aS)-5-hydroxy-7a-methyl-1-oxo-octahydro-1H-inden-4-yl]propanoyl-CoA + A = (2E)-3-[(3aS,4S,5R,7aS)-5-hydroxy-7a-methyl-1-oxo-octahydro-1H-inden-4-yl]prop-2-enoyl-CoA + AH2. Its pathway is steroid metabolism; cholesterol degradation. Functionally, involved in cholesterol degradation. Catalyzes the dehydrogenation of 5OH-HIP-CoA to 5OH-HIPE-CoA. Can also use octanoyl-CoA and dihydroferuloyl-CoA, with lower efficiency. Cannot use 3-oxo-4-pregnene-20-carboxyl-CoA (3-OPC-CoA). This is Acyl-CoA dehydrogenase IpdE2 from Mycobacterium tuberculosis (strain ATCC 25618 / H37Rv).